Consider the following 144-residue polypeptide: Small ribosomal subunit protein uS19 (144 aa).

It belongs to the universal ribosomal protein uS19 family.

The protein is Small ribosomal subunit protein uS19 (rps15) of Dictyostelium discoideum (Social amoeba).